The following is a 375-amino-acid chain: Alcohol dehydrogenase B (375 aa).

Zn(2+)-binding residues include cysteine 40, histidine 62, cysteine 92, cysteine 95, cysteine 98, cysteine 106, and cysteine 169.

Belongs to the zinc-containing alcohol dehydrogenase family. Zn(2+) is required as a cofactor.

The protein localises to the cytoplasm. The enzyme catalyses a primary alcohol + NAD(+) = an aldehyde + NADH + H(+). It carries out the reaction a secondary alcohol + NAD(+) = a ketone + NADH + H(+). This Mycobacterium bovis (strain ATCC BAA-935 / AF2122/97) protein is Alcohol dehydrogenase B (adhB).